The primary structure comprises 223 residues: Phosphoribosylformylglycinamidine synthase subunit PurQ (223 aa).

The region spanning 2 to 223 is the Glutamine amidotransferase type-1 domain; it reads KIAVVVFPGS…KSLLKAGVQA (222 aa). Residue C86 is the Nucleophile of the active site. Residues H195 and E197 contribute to the active site.

In terms of assembly, part of the FGAM synthase complex composed of 1 PurL, 1 PurQ and 2 PurS subunits.

Its subcellular location is the cytoplasm. The catalysed reaction is N(2)-formyl-N(1)-(5-phospho-beta-D-ribosyl)glycinamide + L-glutamine + ATP + H2O = 2-formamido-N(1)-(5-O-phospho-beta-D-ribosyl)acetamidine + L-glutamate + ADP + phosphate + H(+). It carries out the reaction L-glutamine + H2O = L-glutamate + NH4(+). Its pathway is purine metabolism; IMP biosynthesis via de novo pathway; 5-amino-1-(5-phospho-D-ribosyl)imidazole from N(2)-formyl-N(1)-(5-phospho-D-ribosyl)glycinamide: step 1/2. In terms of biological role, part of the phosphoribosylformylglycinamidine synthase complex involved in the purines biosynthetic pathway. Catalyzes the ATP-dependent conversion of formylglycinamide ribonucleotide (FGAR) and glutamine to yield formylglycinamidine ribonucleotide (FGAM) and glutamate. The FGAM synthase complex is composed of three subunits. PurQ produces an ammonia molecule by converting glutamine to glutamate. PurL transfers the ammonia molecule to FGAR to form FGAM in an ATP-dependent manner. PurS interacts with PurQ and PurL and is thought to assist in the transfer of the ammonia molecule from PurQ to PurL. The chain is Phosphoribosylformylglycinamidine synthase subunit PurQ from Lactobacillus acidophilus (strain ATCC 700396 / NCK56 / N2 / NCFM).